Reading from the N-terminus, the 185-residue chain is HTH-type transcriptional regulator PuuR (185 aa).

A disordered region spans residues methionine 1–glycine 20. Positions leucine 12–phenylalanine 66 constitute an HTH cro/C1-type domain. Positions glutamine 23–glutamine 42 form a DNA-binding region, H-T-H motif. The 68-residue stretch at phenylalanine 111–serine 178 folds into the Cupin type-2 domain.

It functions in the pathway amine and polyamine degradation; putrescine degradation [regulation]. Its function is as follows. Represses puuA, puuD and puuP. The sequence is that of HTH-type transcriptional regulator PuuR (puuR) from Escherichia coli (strain K12).